Here is a 261-residue protein sequence, read N- to C-terminus: Probable electron transfer flavoprotein subunit beta (261 aa).

Ser-2 bears the N-acetylserine mark.

It belongs to the ETF beta-subunit/FixA family. In terms of assembly, heterodimer of an alpha and a beta subunit. Interacts with YFH1. The cofactor is FAD. AMP is required as a cofactor.

The protein resides in the mitochondrion matrix. Functionally, the electron transfer flavoprotein serves as a specific electron acceptor for several dehydrogenases, including five acyl-CoA dehydrogenases, glutaryl-CoA and sarcosine dehydrogenase. It transfers the electrons to the main mitochondrial respiratory chain via ETF-ubiquinone oxidoreductase (ETF dehydrogenase). The protein is Probable electron transfer flavoprotein subunit beta (CIR1) of Saccharomyces cerevisiae (strain ATCC 204508 / S288c) (Baker's yeast).